The chain runs to 126 residues: Profilin-1 (126 aa).

Belongs to the profilin family. As to quaternary structure, occurs in many kinds of cells as a complex with monomeric actin in a 1:1 ratio.

Its subcellular location is the cytoplasm. It is found in the cytoskeleton. Binds to actin and affects the structure of the cytoskeleton. At high concentrations, profilin prevents the polymerization of actin, whereas it enhances it at low concentrations. By binding to PIP2, it inhibits the formation of IP3 and DG. The protein is Profilin-1 (proA) of Dictyostelium discoideum (Social amoeba).